A 478-amino-acid chain; its full sequence is Zinc finger protein 410 (478 aa).

A disordered region spans residues 187 to 213 (NAKTSSNGENVHLGSGDGQSKDSGPLP). C2H2-type zinc fingers lie at residues 219–243 (LKCT…LKTH), 249–273 (FICP…MRTH), 279–303 (FMCH…RRIH), 309–333 (FLCE…LVVH), and 339–362 (HQCQ…RKHH). Residues Cys-221, Cys-226, His-239, His-243, Cys-251, Cys-256, His-269, His-273, Cys-281, Cys-286, His-299, His-303, Cys-311, Cys-316, His-329, His-333, Cys-341, Cys-344, His-357, and His-361 each coordinate Zn(2+).

In terms of assembly, interacts with CDKN2A/p14ARF. Post-translationally, sumoylated. Sumoylation increases its half-life, possibly by blocking ubiquitin-mediated degradation. In terms of processing, O-glycosylated. O-GlcNAcylation may occur in response to increasing glucose levels and affect transcription factor activity. Widely expressed.

It is found in the nucleus. Its subcellular location is the chromosome. In terms of biological role, transcription factor that binds to the sequence motif 5'-CATCCCATAATA-3', and is specifically required to silence expression of fetal hemoglobin in adult erythroid cells. Prevents expression of fetal hemoglobin genes HBG1 and HBG2 through CHD4: acts as a direct transcriptional activator of CHD4, a central component of the NuRD complex that represses transcription of fetal hemoglobin genes HBG1 and HBG2 in erythroid cells. May also activate transcription of matrix-remodeling genes such as MMP1 during fibroblast senescence. May activate transcription of the gap junction gene GJC1, perhaps in response to increasing glucose. However, recent studies suggest that ZNF410 is dedicated to regulate expression of a single gene: CHD4. The protein is Zinc finger protein 410 of Homo sapiens (Human).